Here is a 179-residue protein sequence, read N- to C-terminus: Segregation and condensation protein B (179 aa).

Belongs to the ScpB family. As to quaternary structure, homodimer. Homodimerization may be required to stabilize the binding of ScpA to the Smc head domains. Component of a cohesin-like complex composed of ScpA, ScpB and the Smc homodimer, in which ScpA and ScpB bind to the head domain of Smc. The presence of the three proteins is required for the association of the complex with DNA.

The protein localises to the cytoplasm. Its function is as follows. Participates in chromosomal partition during cell division. May act via the formation of a condensin-like complex containing Smc and ScpA that pull DNA away from mid-cell into both cell halves. The polypeptide is Segregation and condensation protein B (Streptococcus equi subsp. equi (strain 4047)).